The primary structure comprises 295 residues: Putative enoyl reductase C646.07c (295 aa).

The Cytoplasmic segment spans residues 1–84 (MSITLSSRGR…KDLGPQIGWR (84 aa)). The chain crosses the membrane as a helical span at residues 85–105 (TVFMIEYLGPLVIHLFFILNY). Residues 106–157 (KWIYRKDYNLCLNQKIAFVLVMLHFMKREYESIFVHRFSLATMPLRNIFKNC) lie on the Lumenal side of the membrane. Residues 158 to 178 (AHYHLLSGLFLAYFIYGPWHA) form a helical membrane-spanning segment. Over 179 to 186 (NDYIKPNH) the chain is Cytoplasmic. A helical membrane pass occupies residues 187 to 207 (LLFLIVGWAFAVLSNFRTHII). The Lumenal portion of the chain corresponds to 208–223 (LRDLRPAGSKKRVIPT). Residues 224–246 (GYGFNLVSFPNYFFESLGWLFFA) traverse the membrane as a helical segment. At 247–250 (LLTK) the chain is on the cytoplasmic side. A helical membrane pass occupies residues 251–268 (SWASWIFLFVGSAQMFVW). At 269–295 (AKKKHARYLKEFPNYPRSRKIMIPFFL) the chain is on the lumenal side.

It belongs to the steroid 5-alpha reductase family.

It is found in the endoplasmic reticulum membrane. It carries out the reaction a (2E)-enoyl-CoA + NADPH + H(+) = a 2,3-saturated acyl-CoA + NADP(+). This Schizosaccharomyces pombe (strain 972 / ATCC 24843) (Fission yeast) protein is Putative enoyl reductase C646.07c.